A 359-amino-acid chain; its full sequence is MPLSRLIIQQFRNIKACDIALSPGFNFLIGPNGSGKTSVLEAIYLLGHGRSFKSALTGRVIQNECDQLFVHGRFLNSDQFELPIGINKQRDGTTEVKIGGQSGQKLAQLAQVLPLQLIHPEGFDLLTDGPKHRRAFIDWGVFHTEPAFYDAWGRFKRLNKQRNALLKSAKSYQELSYWDKEMARLAELISQWRADYVAQMQSKAEQLCQEFLPEFHIQLKYYRGWEKETPYQQILEENFERDQTLGYTVSGPNKADLRIKVNNTPVEDVLSRGQLKLMVCALRLAQGQHLTEKTGKQCVYLIDDFASELDSQRRKRLADCLKQTGAQVFVSSITENQISDMRDDSGRLFNVEQGVIEQG.

Position 30–37 (30–37 (GPNGSGKT)) interacts with ATP.

This sequence belongs to the RecF family.

The protein resides in the cytoplasm. Its function is as follows. The RecF protein is involved in DNA metabolism; it is required for DNA replication and normal SOS inducibility. RecF binds preferentially to single-stranded, linear DNA. It also seems to bind ATP. The chain is DNA replication and repair protein RecF from Vibrio vulnificus (strain YJ016).